The sequence spans 194 residues: RxLR effector protein Avh240 (194 aa).

Positions 1 to 23 (MRPYFTLLLALAFILACTNLVEA) are cleaved as a signal peptide. The RxLR-dEER motif lies at 38 to 57 (RHLRTAVASVVDLPDDEDER). Residues 58–108 (LLGYNTVQLWRMRRTANKLMNGKLTTQKEAALKKWMASQQDKFLAKWLKSS) are host plasma membrane-binding.

This sequence belongs to the RxLR effector family. Homodimer. Interacts with host soybean aspartic protease AP1.

Its subcellular location is the secreted. It localises to the host cell membrane. In terms of biological role, effector that suppresses plant defense responses during the early stages of pathogen infection. Suppresses cell death induced by effectors and PAMPs in plant hosts. Avh240 dimerizes and localizes at the plasma membrane to interfere with aspartic protease AP1 secretion, which presents an effective mechanism by which effector proteins suppress plant apoplastic immunity. The chain is RxLR effector protein Avh240 from Phytophthora sojae (Soybean stem and root rot agent).